A 464-amino-acid chain; its full sequence is Soluble pyridine nucleotide transhydrogenase (464 aa).

Residue 35 to 44 participates in FAD binding; it reads DSRRQVGGNC.

This sequence belongs to the class-I pyridine nucleotide-disulfide oxidoreductase family. Requires FAD as cofactor.

It is found in the cytoplasm. It carries out the reaction NAD(+) + NADPH = NADH + NADP(+). Its function is as follows. Conversion of NADPH, generated by peripheral catabolic pathways, to NADH, which can enter the respiratory chain for energy generation. This chain is Soluble pyridine nucleotide transhydrogenase, found in Pseudomonas fluorescens (strain SBW25).